A 573-amino-acid chain; its full sequence is Methionine--tRNA ligase (573 aa).

The 'HIGH' region motif lies at 10–20 (PYVNSVPHLGN). Zn(2+) contacts are provided by Cys143, Cys146, Cys156, and Cys159. The short motif at 333 to 337 (KFSKS) is the 'KMSKS' region element. Lys336 is a binding site for ATP.

It belongs to the class-I aminoacyl-tRNA synthetase family. MetG type 1 subfamily. Requires Zn(2+) as cofactor.

It localises to the cytoplasm. The enzyme catalyses tRNA(Met) + L-methionine + ATP = L-methionyl-tRNA(Met) + AMP + diphosphate. In terms of biological role, is required not only for elongation of protein synthesis but also for the initiation of all mRNA translation through initiator tRNA(fMet) aminoacylation. The sequence is that of Methionine--tRNA ligase from Saccharolobus solfataricus (strain ATCC 35092 / DSM 1617 / JCM 11322 / P2) (Sulfolobus solfataricus).